A 352-amino-acid chain; its full sequence is C-C chemokine receptor type 5 (352 aa).

Residues 1 to 30 (MDYQTSTPLYDIDYGMSEPCQKLNVRQIAA) lie on the Extracellular side of the membrane. Tyrosine 3 is modified (sulfotyrosine). Serine 6 carries O-linked (GalNAc...) serine glycosylation. Residues tyrosine 10 and tyrosine 14 each carry the sulfotyrosine modification. Cystine bridges form between cysteine 20-cysteine 269 and cysteine 101-cysteine 178. A helical transmembrane segment spans residues 31–58 (RLLPPLYSLVFIFGFVGNMLVVLILINC). The Cytoplasmic portion of the chain corresponds to 59–68 (KKLKSMTDIY). The helical transmembrane segment at 69-89 (LLNLAISDLLFIITIPFWAHY) threads the bilayer. At 90-102 (AADQWVFGNTMCQ) the chain is on the extracellular side. Residues 103-124 (LFTGFYFIGYFGGIFFIILLTI) form a helical membrane-spanning segment. Topologically, residues 125–141 (DRYLAIVHAVFALKART) are cytoplasmic. Residues 142–166 (VTFGAATSVVTWVVAVFASLPGIIF) form a helical membrane-spanning segment. Topologically, residues 167–198 (TKSQKEGSRHTCSPHFPSSQYHFWKNFQTLKI) are extracellular. The helical transmembrane segment at 199-218 (VILGLVLPLLVMIVCYSGII) threads the bilayer. Topologically, residues 219 to 235 (KTLLRCRNEKKKHKAVR) are cytoplasmic. The helical transmembrane segment at 236-260 (LIFVIMIVYFLFWAPYNIVLLLSTF) threads the bilayer. Residues 261–277 (QEFFGLNNCSGSNRLDQ) are Extracellular-facing. The helical transmembrane segment at 278 to 301 (AMQVTETLGMTHCCINPIIYAFVG) threads the bilayer. At 302 to 352 (EKFRNYLLRFFRKYFASRFCKGCPVFQGEAPERVSSVYTRSTGEQEISVGL) the chain is on the cytoplasmic side. 2 S-palmitoyl cysteine lipidation sites follow: cysteine 321 and cysteine 324. A phosphoserine; by BARK1 mark is found at serine 336, serine 337, serine 342, and serine 349.

Belongs to the G-protein coupled receptor 1 family. Interacts with PRAF2. Efficient ligand binding to CCL3/MIP-1alpha and CCL4/MIP-1beta requires sulfation, O-glycosylation and sialic acid modifications. Glycosylation on Ser-6 is required for efficient binding of CCL4. Interacts with GRK2. Interacts with ARRB1 and ARRB2. Interacts with CNIH4. Interacts with S100A4; this interaction stimulates T-lymphocyte chemotaxis. Sulfated on at least 2 of the N-terminal tyrosines. Sulfation is required for efficient binding of the chemokines, CCL3 and CCL4. In terms of processing, O-glycosylated, but not N-glycosylated. Ser-6 appears to be the major site. Also sialylated glycans present which contribute to chemokine binding. Ser-17 may also be glycosylated and, if so, with small moieties such as a T-antigen. Post-translationally, palmitoylation in the C-terminal is important for cell surface expression. Phosphorylation on serine residues in the C-terminal is stimulated by binding CC chemokines especially by APO-RANTES.

It localises to the cell membrane. Receptor for a number of inflammatory CC-chemokines including CCL3/MIP-1-alpha, CCL4/MIP-1-beta and RANTES and subsequently transduces a signal by increasing the intracellular calcium ion level. May play a role in the control of granulocytic lineage proliferation or differentiation. Participates in T-lymphocyte migration to the infection site by acting as a chemotactic receptor. The chain is C-C chemokine receptor type 5 (CCR5) from Bos taurus (Bovine).